The chain runs to 845 residues: MPLSYQHFRKLLLLDDGTEVGPLEEELPRLADEDLNRRVAEDLNLGNLNVSIPWTHKVGNFTGLYSSTVPIFNQEWQTPSFPKIHLHEDIINRCQQFVGPLNVNEKRRLKLIMPARFYPNSTKYLPLDKGIKPYYPGHVVNHYFQARHYLHTLWKAGILYKRETTRSASFCGSPYSWEQELHHGRSVTKTSQRHGDESFCSQPSGILSRSSVGPCIRSQLKQPRLGLQPHQGPLATSQSGRSGSIWARVHPSTRRSSGVEPSGSGHIDYSASSSSSCLHQSAVRKTAYSHLSTSKRQSSSGHAVEFHKVPPNSARSQSQGPVFSCWWLQFRNSQPCSEYCLSHLVNLLEDWGPCADHGEHHIRIPRTPARVTGGVFLVDKNPHNTAESRLVVDFSQFSRGSTRVSWPKFAVPNLQSLTNLLSSNLSWLSLDVSAAFYHIPLHPAAMPHLLIGSSGLSRYVARLSSNSRIHNHQYGTLQNLHDSCSRQLYVSLMLLYKTYGRKLHLYSHPIILGFRKIPMGVGLSPFLLAQFTSAICSVVRRAFPHCLAFSYMDDVVLGAKSVQHLESLYTAVTNFLLSLGIHLNPNKTKRWGYSLNFMGYIIGSWGSLPQDHIVQKLKHCFRKLPVNRPIDWKVCQRIVGLLGFAAPFTQCGYPALMPLYACIQARQAFTFSPTYKAFLSKQYMNLYPVARQRPGLCQVFADATPTGWGLAIGHQRMRGTFVAPLPIHTAELLAACFARSRSGATLIGTDNSVVLSRKYTSFPWLLGCTANWILRGTSFVYVPSALNPADDPSRGRLGLYRPLLRLPYRPTTGRTSLYAVSPSVPSHLPDRVHFASPLHVAWRPP.

A terminal protein domain (TP) region spans residues Met-1–Gln-179. The tract at residues Glu-180–Leu-348 is spacer. 3 disordered regions span residues Ser-186–Gly-205, Gln-222–Ile-245, and Tyr-288–Ser-318. Residues Ser-289–Gly-301 show a composition bias toward polar residues. Residues Glu-349–Gln-692 form a polymerase/reverse transcriptase domain (RT) region. The Reverse transcriptase domain occupies Glu-359–Ile-602. Residues Asp-431, Asp-553, and Asp-554 each contribute to the Mg(2+) site.

This sequence belongs to the hepadnaviridae P protein family.

It catalyses the reaction DNA(n) + a 2'-deoxyribonucleoside 5'-triphosphate = DNA(n+1) + diphosphate. The catalysed reaction is Endonucleolytic cleavage to 5'-phosphomonoester.. With respect to regulation, activated by host HSP70 and HSP40 in vitro to be able to bind the epsilon loop of the pgRNA. Because deletion of the RNase H region renders the protein partly chaperone-independent, the chaperones may be needed indirectly to relieve occlusion of the RNA-binding site by this domain. Inhibited by several reverse-transcriptase inhibitors: Lamivudine, Adefovir and Entecavir. Multifunctional enzyme that converts the viral RNA genome into dsDNA in viral cytoplasmic capsids. This enzyme displays a DNA polymerase activity that can copy either DNA or RNA templates, and a ribonuclease H (RNase H) activity that cleaves the RNA strand of RNA-DNA heteroduplexes in a partially processive 3'- to 5'-endonucleasic mode. Neo-synthesized pregenomic RNA (pgRNA) are encapsidated together with the P protein, and reverse-transcribed inside the nucleocapsid. Initiation of reverse-transcription occurs first by binding the epsilon loop on the pgRNA genome, and is initiated by protein priming, thereby the 5'-end of (-)DNA is covalently linked to P protein. Partial (+)DNA is synthesized from the (-)DNA template and generates the relaxed circular DNA (RC-DNA) genome. After budding and infection, the RC-DNA migrates in the nucleus, and is converted into a plasmid-like covalently closed circular DNA (cccDNA). The activity of P protein does not seem to be necessary for cccDNA generation, and is presumably released from (+)DNA by host nuclear DNA repair machinery. This Hepatitis B virus genotype A3 (isolate Cameroon/CMR711/1994) (HBV-A) protein is Protein P.